Reading from the N-terminus, the 84-residue chain is Cell division topological specificity factor (84 aa).

It belongs to the MinE family.

Prevents the cell division inhibition by proteins MinC and MinD at internal division sites while permitting inhibition at polar sites. This ensures cell division at the proper site by restricting the formation of a division septum at the midpoint of the long axis of the cell. This Paraburkholderia xenovorans (strain LB400) protein is Cell division topological specificity factor.